Consider the following 476-residue polypeptide: Trigger factor (476 aa).

One can recognise a PPIase FKBP-type domain in the interval 174 to 261 (GDIAVVSFKG…LKDLKEKELP (88 aa)). The disordered stretch occupies residues 436–476 (KENTTKTSKTTKNSKTTKATKTTKTTKTTKTSKTQNKKEKK). Residues 440–469 (TKTSKTTKNSKTTKATKTTKTTKTTKTSKT) show a composition bias toward low complexity.

It belongs to the FKBP-type PPIase family. Tig subfamily.

It localises to the cytoplasm. The enzyme catalyses [protein]-peptidylproline (omega=180) = [protein]-peptidylproline (omega=0). Functionally, involved in protein export. Acts as a chaperone by maintaining the newly synthesized protein in an open conformation. Functions as a peptidyl-prolyl cis-trans isomerase. In Prochlorococcus marinus (strain MIT 9215), this protein is Trigger factor.